The primary structure comprises 275 residues: NH(3)-dependent NAD(+) synthetase (275 aa).

46–53 (GISGGQDS) contacts ATP. Asp-52 lines the Mg(2+) pocket. Arg-140 is a deamido-NAD(+) binding site. Thr-160 contacts ATP. Glu-165 contacts Mg(2+). Deamido-NAD(+) contacts are provided by Lys-173 and Asp-180. Residues Lys-189 and Thr-211 each coordinate ATP. 260–261 (HK) is a deamido-NAD(+) binding site.

It belongs to the NAD synthetase family. In terms of assembly, homodimer.

It carries out the reaction deamido-NAD(+) + NH4(+) + ATP = AMP + diphosphate + NAD(+) + H(+). It participates in cofactor biosynthesis; NAD(+) biosynthesis; NAD(+) from deamido-NAD(+) (ammonia route): step 1/1. Its function is as follows. Catalyzes the ATP-dependent amidation of deamido-NAD to form NAD. Uses ammonia as a nitrogen source. The protein is NH(3)-dependent NAD(+) synthetase of Escherichia fergusonii (strain ATCC 35469 / DSM 13698 / CCUG 18766 / IAM 14443 / JCM 21226 / LMG 7866 / NBRC 102419 / NCTC 12128 / CDC 0568-73).